A 317-amino-acid polypeptide reads, in one-letter code: Protoheme IX farnesyltransferase (317 aa).

The next 9 helical transmembrane spans lie at 36-56 (VMVL…ATVN), 57-77 (PVIA…SGCL), 108-128 (LAFG…ASNW), 129-149 (LAAG…SMWL), 157-177 (IVIG…AVTG), 184-204 (LVLF…LALV), 230-247 (IVWY…PVWL), 251-273 (GWLY…VQVY), and 284-304 (AAMG…SALL).

It belongs to the UbiA prenyltransferase family. Protoheme IX farnesyltransferase subfamily.

Its subcellular location is the cell inner membrane. The catalysed reaction is heme b + (2E,6E)-farnesyl diphosphate + H2O = Fe(II)-heme o + diphosphate. Its pathway is porphyrin-containing compound metabolism; heme O biosynthesis; heme O from protoheme: step 1/1. Its function is as follows. Converts heme B (protoheme IX) to heme O by substitution of the vinyl group on carbon 2 of heme B porphyrin ring with a hydroxyethyl farnesyl side group. The sequence is that of Protoheme IX farnesyltransferase from Methylorubrum populi (strain ATCC BAA-705 / NCIMB 13946 / BJ001) (Methylobacterium populi).